Here is a 195-residue protein sequence, read N- to C-terminus: MKIWTSEHVFDHPWETVTTAAMQKYPNPMNPSVVGVDVLDRHVDPSGKLHSHRLLSTEWGLPSIVKSLIGAARTKTYVQEHSVVDPVTRTMELKSTNISFTNMVSVDERLTYKPHLQDPEKTVLTQEALITVKGVSLSSYLEGLMASTISSNASKGREAMEWVIHKLNAEIEELAASARGSIRTPMAAAAALVDK.

In terms of domain architecture, PRELI/MSF1 spans 1–172 (MKIWTSEHVF…VIHKLNAEIE (172 aa)). Phosphoserine is present on residues Ser46 and Ser51.

The protein belongs to the slowmo family.

This Mus musculus (Mouse) protein is PRELI domain containing protein 3B (Prelid3b).